The primary structure comprises 338 residues: MNLQRFPRYPLTFGPTPIQPLKRLSEHLGGKVELYAKREDCNSGLAFGGNKTRKLEYLIPDALEQRADTLVSIGGVQSNQTRQVAAVAAHLGMKCVLVQEHWVNYDDPVYDRVGNIQLSRMMGADVRLVPDGFDIGIRRSWEEALESVKQAGGRPYPIPAGCSEHPLGGLGFVGFAEEVRAQEAQFGLRFDYIVVCSVTGSTQAGMIVGFAADGRADRVIGIDASATPARTREQITRIARHTAELVDLGRDITDADVVLDTRYAGPEYGLPNEGTLEAIRLCARLEGVLTDPVYEGKSMHGMIDKVRRGEFEPGSKVLYAHLGGVPALSAYSAIFADG.

Lys-51 bears the N6-(pyridoxal phosphate)lysine mark. Ser-78 functions as the Nucleophile in the catalytic mechanism.

This sequence belongs to the ACC deaminase/D-cysteine desulfhydrase family. Homotrimer. Pyridoxal 5'-phosphate serves as cofactor.

It catalyses the reaction 1-aminocyclopropane-1-carboxylate + H2O = 2-oxobutanoate + NH4(+). Its function is as follows. Catalyzes a cyclopropane ring-opening reaction, the irreversible conversion of 1-aminocyclopropane-1-carboxylate (ACC) to ammonia and alpha-ketobutyrate. Allows growth on ACC as a nitrogen source. The chain is 1-aminocyclopropane-1-carboxylate deaminase from Burkholderia multivorans (strain ATCC 17616 / 249).